The chain runs to 193 residues: Protein B4 (193 aa).

The next 3 membrane-spanning stretches (helical) occupy residues Phe15–Phe35, Cys36–Val56, and Leu160–Ser180.

Its subcellular location is the host membrane. This Homo sapiens (Human) protein is Protein B4 (B4).